The sequence spans 313 residues: 3'-5' exoribonuclease YhaM (313 aa).

Positions 22–90 form a DNA-binding region, OB; it reads SSVKGTASNG…QLKIRQIRQA (69 aa). The region spanning 163 to 279 is the HD domain; it reads HVVSMLRLAK…LHQIDLMDAS (117 aa).

It belongs to the YhaM family.

Its function is as follows. Shows a 3'-5' exoribonuclease activity. The chain is 3'-5' exoribonuclease YhaM from Listeria innocua serovar 6a (strain ATCC BAA-680 / CLIP 11262).